The sequence spans 142 residues: Photosystem II extrinsic protein U (142 aa).

Positions 1–29 (MKGLVRLLTVFSLLLGCWGWLGTTQIAQA) are cleaved as a signal peptide.

It belongs to the PsbU family. As to quaternary structure, PSII is composed of 1 copy each of membrane proteins PsbA, PsbB, PsbC, PsbD, PsbE, PsbF, PsbH, PsbI, PsbJ, PsbK, PsbL, PsbM, PsbT, PsbX, PsbY, PsbZ, Psb30/Ycf12, peripheral proteins PsbO, CyanoQ (PsbQ), PsbU, PsbV and a large number of cofactors. It forms dimeric complexes.

It is found in the cellular thylakoid membrane. Functionally, one of the extrinsic, lumenal subunits of photosystem II (PSII). PSII is a light-driven water plastoquinone oxidoreductase, using light energy to abstract electrons from H(2)O, generating a proton gradient subsequently used for ATP formation. The extrinsic proteins stabilize the structure of photosystem II oxygen-evolving complex (OEC), the ion environment of oxygen evolution and protect the OEC against heat-induced inactivation. This chain is Photosystem II extrinsic protein U, found in Nostoc sp. (strain PCC 7120 / SAG 25.82 / UTEX 2576).